We begin with the raw amino-acid sequence, 364 residues long: UDP-N-acetylglucosamine--N-acetylmuramyl-(pentapeptide) pyrophosphoryl-undecaprenol N-acetylglucosamine transferase (364 aa).

UDP-N-acetyl-alpha-D-glucosamine-binding positions include 16–18 (TGG), Asn128, Arg166, Ser195, Ile249, and Gln294.

It belongs to the glycosyltransferase 28 family. MurG subfamily.

Its subcellular location is the cell inner membrane. It carries out the reaction di-trans,octa-cis-undecaprenyl diphospho-N-acetyl-alpha-D-muramoyl-L-alanyl-D-glutamyl-meso-2,6-diaminopimeloyl-D-alanyl-D-alanine + UDP-N-acetyl-alpha-D-glucosamine = di-trans,octa-cis-undecaprenyl diphospho-[N-acetyl-alpha-D-glucosaminyl-(1-&gt;4)]-N-acetyl-alpha-D-muramoyl-L-alanyl-D-glutamyl-meso-2,6-diaminopimeloyl-D-alanyl-D-alanine + UDP + H(+). Its pathway is cell wall biogenesis; peptidoglycan biosynthesis. Functionally, cell wall formation. Catalyzes the transfer of a GlcNAc subunit on undecaprenyl-pyrophosphoryl-MurNAc-pentapeptide (lipid intermediate I) to form undecaprenyl-pyrophosphoryl-MurNAc-(pentapeptide)GlcNAc (lipid intermediate II). In Chromohalobacter salexigens (strain ATCC BAA-138 / DSM 3043 / CIP 106854 / NCIMB 13768 / 1H11), this protein is UDP-N-acetylglucosamine--N-acetylmuramyl-(pentapeptide) pyrophosphoryl-undecaprenol N-acetylglucosamine transferase.